We begin with the raw amino-acid sequence, 588 residues long: Adenylate kinase 5, chloroplastic (588 aa).

The interval 1–34 (MASLSLSSAHFSSTSSSSRSSISTSSLSPSSTSL) is disordered. A chloroplast-targeting transit peptide spans 1 to 73 (MASLSLSSAH…SFSTSNSQIR (73 aa)). 89–94 (ASGKGT) contributes to the ATP binding site. The interval 109-138 (STGDLLRAEVSSGTDIGKRAKEFMNSGSLV) is NMP. Residues R115, 136–138 (SLV), 165–168 (GFPR), and Q172 each bind AMP. The LID stretch occupies residues 202–235 (GRRLDPVTGKIYHIKNYPPESDEIKARLVTRPDD). R203 serves as a coordination point for ATP. 2 residues coordinate AMP: R232 and R243.

It belongs to the adenylate kinase family. As to quaternary structure, monomer.

It localises to the plastid. The protein localises to the chloroplast. It carries out the reaction AMP + ATP = 2 ADP. Its function is as follows. Catalyzes the reversible transfer of the terminal phosphate group between ATP and AMP. This is Adenylate kinase 5, chloroplastic from Arabidopsis thaliana (Mouse-ear cress).